The primary structure comprises 118 residues: Large ribosomal subunit protein bL19 (118 aa).

The protein belongs to the bacterial ribosomal protein bL19 family.

Functionally, this protein is located at the 30S-50S ribosomal subunit interface and may play a role in the structure and function of the aminoacyl-tRNA binding site. This is Large ribosomal subunit protein bL19 from Campylobacter concisus (strain 13826).